The primary structure comprises 624 residues: tRNA uridine 5-carboxymethylaminomethyl modification enzyme MnmG (624 aa).

FAD-binding positions include 13 to 18 (GAGHAG), V125, and S180. Position 272–286 (272–286 (GPRYCPSIEDKVVKF)) interacts with NAD(+). Q369 is a binding site for FAD.

This sequence belongs to the MnmG family. As to quaternary structure, homodimer. Heterotetramer of two MnmE and two MnmG subunits. FAD is required as a cofactor.

It localises to the cytoplasm. Its function is as follows. NAD-binding protein involved in the addition of a carboxymethylaminomethyl (cmnm) group at the wobble position (U34) of certain tRNAs, forming tRNA-cmnm(5)s(2)U34. The protein is tRNA uridine 5-carboxymethylaminomethyl modification enzyme MnmG of Thermodesulfovibrio yellowstonii (strain ATCC 51303 / DSM 11347 / YP87).